The following is a 345-amino-acid chain: Mannonate dehydratase 2 (345 aa).

This sequence belongs to the mannonate dehydratase family. Fe(2+) is required as a cofactor. Mn(2+) serves as cofactor.

It catalyses the reaction D-mannonate = 2-dehydro-3-deoxy-D-gluconate + H2O. It functions in the pathway carbohydrate metabolism; pentose and glucuronate interconversion. In terms of biological role, catalyzes the dehydration of D-mannonate. This chain is Mannonate dehydratase 2 (uxuA2), found in Halalkalibacterium halodurans (strain ATCC BAA-125 / DSM 18197 / FERM 7344 / JCM 9153 / C-125) (Bacillus halodurans).